The following is a 196-amino-acid chain: Rho-related protein racA (196 aa).

11 residues coordinate GTP: A13, G15, K16, T17, C18, Y32, T35, G60, K116, D118, and A159. T17 is a Mg(2+) binding site. 2 short sequence motifs (switch) span residues 26-37 and 57-75; these read NAFPNEYIPTVF and DTAGQEDYDRLRPLSYPQT. T35 is a Mg(2+) binding site. C193 is subject to Cysteine methyl ester. The S-geranylgeranyl cysteine moiety is linked to residue C193. Residues 194-196 constitute a propeptide, removed in mature form; sequence LLF.

Belongs to the small GTPase superfamily. Rho family. In terms of assembly, interacts (GTP-bound form) with PAK2 (via CRIB domain). It depends on Mg(2+) as a cofactor.

The protein localises to the cell membrane. The protein resides in the cytoplasm. It localises to the cytoskeleton. It catalyses the reaction GTP + H2O = GDP + phosphate + H(+). Regulated by guanine nucleotide exchange factors (GEFs) which promote the exchange of bound GDP for free GTP, GTPase activating proteins (GAPs) which increase the GTP hydrolysis activity, and GDP dissociation inhibitors which inhibit the dissociation of the nucleotide from the GTPase. Small GTPase which cycles between active GTP-bound and inactive GDP-bound states. Involved in cytoskeleton remodeling. Plays a role in phagocytosis of bacteria and host erythrocytes. Involved in capping of surface receptors. May be involved in cytokinesis. The chain is Rho-related protein racA from Entamoeba histolytica (strain ATCC 30459 / HM-1:IMSS / ABRM).